The sequence spans 690 residues: Methionine--tRNA ligase (690 aa).

A 'HIGH' region motif is present at residues 12–22 (PYANGPLHLGH). Zn(2+) is bound by residues cysteine 144, cysteine 147, cysteine 157, and cysteine 160. The 'KMSKS' region motif lies at 333 to 337 (QFSKS). Residue lysine 336 participates in ATP binding. Positions 535 to 632 (KKINIDLMVG…VNADDGSRMK (98 aa)) constitute a tRNA-binding domain.

Belongs to the class-I aminoacyl-tRNA synthetase family. MetG type 1 subfamily. As to quaternary structure, homodimer. Zn(2+) serves as cofactor.

The protein localises to the cytoplasm. It catalyses the reaction tRNA(Met) + L-methionine + ATP = L-methionyl-tRNA(Met) + AMP + diphosphate. Functionally, is required not only for elongation of protein synthesis but also for the initiation of all mRNA translation through initiator tRNA(fMet) aminoacylation. The chain is Methionine--tRNA ligase from Picrophilus torridus (strain ATCC 700027 / DSM 9790 / JCM 10055 / NBRC 100828 / KAW 2/3).